The following is a 407-amino-acid chain: (R)-phenyllactyl-CoA dehydratase alpha subunit (407 aa).

The propeptide occupies 1 to 4 (MSDR).

The protein belongs to the FldB/FldC dehydratase alpha/beta subunit family. In terms of assembly, part of the heterotrimeric phenyllactate dehydratase complex FldABC, composed of (R)-phenyllactate CoA-transferase (FldA) and a heterodimeric (R)-phenyllactyl-CoA dehydratase (FldB and FldC). The cofactor is [4Fe-4S] cluster. No flavin could be detected in the FldABC complex, and the addition of FAD, FMN or riboflavin to the dehydratase do not increase enzymatic activity. serves as cofactor.

The enzyme catalyses (R)-3-phenyllactoyl-CoA = (E)-cinnamoyl-CoA + H2O. The catalysed reaction is (R)-3-(4-hydroxyphenyl)lactoyl-CoA = (E)-4-coumaroyl-CoA + H2O. It catalyses the reaction (R)-3-(indol-3-yl)lactoyl-CoA = (E)-3-(indol-3-yl)acryloyl-CoA + H2O. It participates in amino-acid degradation; L-phenylalanine degradation. In terms of biological role, component of the phenyllactate dehydratase complex FldABC that is involved in the fermentation of L-phenylalanine via a Stickland reaction. This complex catalyzes the reversible syn-dehydration of (R)-phenyllactate to (E)-cinnamate in two steps, a CoA-transfer from cinnamoyl-CoA to phenyllactate, catalyzed by FldA, followed by the dehydration of phenyllactyl-CoA to cinnamoyl-CoA, catalyzed by FldB and FldC. Requires the activator FldI to initiate catalysis. This chain is (R)-phenyllactyl-CoA dehydratase alpha subunit, found in Clostridium sporogenes.